The sequence spans 2375 residues: Talin-2 (2375 aa).

One can recognise an FERM domain in the interval 88-406 (RPQKIRMLDG…GYIDIILKKK (319 aa)). The segment at 312-406 (GVSFFLVKEK…GYIDIILKKK (95 aa)) is interaction with PIP5K1C. Phosphoserine is present on residues S428, S450, S624, and S1024. Y1666 is subject to Phosphotyrosine. One can recognise an I/LWEQ domain in the interval 2205–2375 (TEWVDPEDPT…KRLQAAGNAV (171 aa)).

Interacts directly with PIP5K1C.

The protein localises to the cytoplasm. Its subcellular location is the cell junction. It localises to the focal adhesion. It is found in the synapse. The protein resides in the cell membrane. The protein localises to the cytoskeleton. In terms of biological role, as a major component of focal adhesion plaques that links integrin to the actin cytoskeleton, may play an important role in cell adhesion. Recruits PIP5K1C to focal adhesion plaques and strongly activates its kinase activity. In Mus musculus (Mouse), this protein is Talin-2 (Tln2).